A 247-amino-acid polypeptide reads, in one-letter code: Syntaxin-like protein fsv1 (247 aa).

Residues 27 to 94 (NPDEEIESSL…FEKQRRASSI (68 aa)) adopt a coiled-coil conformation. The interval 88–130 (QRRASSIPADGTSAFSANPQVASTNNKLTPLPSLQKTTSSSEG) is disordered. The segment covering 100 to 130 (SAFSANPQVASTNNKLTPLPSLQKTTSSSEG) has biased composition (polar residues). The t-SNARE coiled-coil homology domain maps to 159 to 221 (QQMLNEQEES…DHAKNRLNKV (63 aa)).

The protein resides in the golgi apparatus membrane. The protein localises to the prevacuolar compartment membrane. Involved in vesicle-mediated protein transport between the Golgi and the vacuole. This Schizosaccharomyces pombe (strain 972 / ATCC 24843) (Fission yeast) protein is Syntaxin-like protein fsv1 (fsv1).